The sequence spans 352 residues: C-C chemokine receptor type 5 (352 aa).

The Extracellular segment spans residues 1–30 (MDYQVSSPIYDIDYGPSEPCRKIDVKQMGA). The residue at position 3 (Y3) is a Sulfotyrosine. O-linked (GalNAc...) serine glycans are attached at residues S6 and S7. A sulfotyrosine mark is found at Y10 and Y14. Disulfide bonds link C20-C269 and C101-C178. A helical membrane pass occupies residues 31 to 58 (HLLPPLYSMVFLFGFVGNMLVVLILINC). At 59 to 68 (KRLKSMTDIY) the chain is on the cytoplasmic side. A helical transmembrane segment spans residues 69 to 89 (LLNLAISDLIFLFTVPFWAHY). At 90 to 102 (AAGQWDFGNTMCQ) the chain is on the extracellular side. Residues 103 to 124 (FLTGLYFIGFFSGIFFIILLTI) traverse the membrane as a helical segment. At 125 to 141 (DRYLAIVHAVFALKART) the chain is on the cytoplasmic side. A helical membrane pass occupies residues 142–166 (VTFGVVTSVITWVVAVFASLPGIIF). Residues 167-198 (TRSQKEGYHYTCSPHFPFSQYQFWKNFETLKM) are Extracellular-facing. The helical transmembrane segment at 199–218 (VILGLVLPLLVMVICYSGIL) threads the bilayer. The Cytoplasmic portion of the chain corresponds to 219–235 (KTLLRCRNEKKRHRAVR). The helical transmembrane segment at 236–260 (LIFTIMIVYFLFWAPYNIVLLLNTY) threads the bilayer. Over 261 to 277 (QEFFGLNNCSSSNRLDQ) the chain is Extracellular. The helical transmembrane segment at 278 to 301 (AMQVTETLGMTHCCVNPIIYAFVG) threads the bilayer. Residues 302 to 352 (EKFRNYLKVFFQKHIAKCFCECCSIFQKEAPERANSVYTRSTGEQEISVGL) are Cytoplasmic-facing. S-palmitoyl cysteine attachment occurs at residues C321, C323, and C324. 3 positions are modified to phosphoserine; by BARK1: S337, S342, and S349.

Belongs to the G-protein coupled receptor 1 family. In terms of assembly, interacts with PRAF2. Efficient ligand binding to CCL3/MIP-1alpha and CCL4/MIP-1beta requires sulfation, O-glycosylation and sialic acid modifications. Glycosylation on Ser-6 is required for efficient binding of CCL4. Interacts with GRK2. Interacts with ARRB1 and ARRB2. Interacts with CNIH4. Interacts with S100A4; this interaction stimulates T-lymphocyte chemotaxis. Post-translationally, sulfated on at least 2 of the N-terminal tyrosines. Sulfation is required for efficient binding of the chemokines, CCL3 and CCL4. In terms of processing, palmitoylation in the C-terminal is important for cell surface expression. Phosphorylation on serine residues in the C-terminal is stimulated by binding CC chemokines especially by APO-RANTES. Post-translationally, O-glycosylated, but not N-glycosylated. Ser-6 appears to be the major site even if Ser-7 may be also O-glycosylated. Also sialylated glycans present which contribute to chemokine binding. Ser-17 may also be glycosylated and, if so, with small moieties such as a T-antigen.

The protein localises to the cell membrane. Receptor for a number of inflammatory CC-chemokines including CCL3/MIP-1-alpha, CCL4/MIP-1-beta and RANTES and subsequently transduces a signal by increasing the intracellular calcium ion level. May play a role in the control of granulocytic lineage proliferation or differentiation. Participates in T-lymphocyte migration to the infection site by acting as a chemotactic receptor. The polypeptide is C-C chemokine receptor type 5 (CCR5) (Mico humeralifer (Black and white tassel-ear marmoset)).